Here is a 229-residue protein sequence, read N- to C-terminus: Wtf element wtf14 (229 aa).

Positions 1–26 (MENNHHLAKDSLDELNPKRGKGEHET) are enriched in basic and acidic residues. Positions 1–27 (MENNHHLAKDSLDELNPKRGKGEHETQ) are disordered. A run of 4 helical transmembrane segments spans residues 71–91 (IPAVLLPVFVINIALFKYLVF), 100–120 (VLFGLGNGGINIFSMWLLLAT), 151–171 (LYAILKLTFVNAFAIPLLMFF), and 188–208 (VIGVMLNVAYFIIEIENPGLF).

Belongs to the WTF family.

The protein resides in the endoplasmic reticulum membrane. In terms of biological role, may act in meiotic drive. This Schizosaccharomyces pombe (strain 972 / ATCC 24843) (Fission yeast) protein is Wtf element wtf14.